A 1453-amino-acid chain; its full sequence is Collagen alpha-1(I) chain (1453 aa).

The first 22 residues, 1–22 (MFSFVDLRLLLLLGATALLTHG), serve as a signal peptide directing secretion. Positions 23 to 151 (QEDIPEVSCI…PPGLGGNFAS (129 aa)) are cleaved as a propeptide — N-terminal propeptide. In terms of domain architecture, VWFC spans 29-87 (VSCIHNGLRVPNGETWKPEVCLICICHNGTAVCDDVQCNEELDCPNPQRREGECCAFCP). An N-linked (GlcNAc...) asparagine glycan is attached at Asn56. Residues 94 to 1210 (NSEDVGVEGP…GGRYYRADDA (1117 aa)) form a disordered region. Pro residues-rich tracts occupy residues 109 to 118 (PQGPRGPVGP) and 128 to 143 (PGLP…PGPP). The nonhelical region (N-terminal) stretch occupies residues 152-167 (QMSYGYDEKSAGVSVP). Allysine is present on Lys160. Position 161 is a phosphoserine (Ser161). Positions 168 to 1181 (GPMGPSGPRG…PGPPGPPGPP (1014 aa)) are triple-helical region. 4-hydroxyproline is present on residues Pro179, Pro182, Pro185, Pro194, Pro197, Pro200, Pro215, Pro230, Pro236, Pro245, and Pro251. Over residues 198 to 207 (GEPGGSGPMG) the composition is skewed to gly residues. The span at 218 to 232 (NGDDGEAGKPGRPGE) shows a compositional bias: basic and acidic residues. Lys254 bears the 5-hydroxylysine; alternate mark. A glycan (O-linked (Gal...) hydroxylysine; alternate) is linked at Lys254. Phosphoserine is present on Ser260. Residues 268–284 (DAGPAGPKGEPGSPGEN) show a composition bias toward low complexity. 4-hydroxyproline is present on residues Pro278, Pro281, Pro287, Pro296, and Pro302. The span at 307–320 (TAGARGNDGAVGAA) shows a compositional bias: low complexity. Over residues 322–334 (PPGPTGPTGPPGF) the composition is skewed to pro residues. Residues Pro323, Pro332, Pro335, Pro362, Pro365, Pro377, Pro383, Pro392, Pro398, Pro401, and Pro416 each carry the 4-hydroxyproline modification. Positions 368–407 (AGAAGPAGNPGADGQPGAKGANGAPGIAGAPGFPGARGPS) are enriched in low complexity. The residue at position 419 (Lys419) is a 5-hydroxylysine. Residues Pro425, Pro428, Pro440, Pro449, Pro464, Pro470, Pro479, and Pro485 each carry the 4-hydroxyproline modification. Gly residues predominate over residues 474 to 483 (GERGGPGSRG). At Lys494 the chain carries 5-hydroxylysine. Positions 499 to 515 (ERGAPGPAGPKGSPGEA) are enriched in low complexity. Pro503, Pro512, Pro518, Pro524, Pro533, Pro536, Pro545, Pro554, Pro560, Pro572, Pro581, Pro590, Pro593, Pro611, Pro629, Pro635, Pro641, Pro647, Pro653, Pro659, Pro671, Pro680, Pro692, Pro704, Pro707, Pro713, Pro719, and Pro728 each carry 4-hydroxyproline. Positions 527-566 (KGLTGSPGSPGPDGKTGPPGPAGQDGRPGPAGPPGARGQA) are enriched in low complexity. A compositionally biased stretch (low complexity) spans 623–650 (QGPAGSPGFQGLPGPAGPPGEAGKPGEQ). 2 stretches are compositionally biased toward low complexity: residues 685 to 695 (PRGNNGAPGND) and 703 to 716 (APGA…PGLQ). A Cell attachment site motif is present at residues 734–736 (RGD). Lys740 is modified (5-hydroxylysine). 3 positions are modified to 4-hydroxyproline: Pro746, Pro761, and Pro767. Ser776 bears the Phosphoserine mark. 4-hydroxyproline occurs at positions 788, 797, 806, 812, 830, 839, and 848. Positions 800 to 815 (AGFAGPPGADGQPGAK) are enriched in low complexity. Residues 829–841 (PPGPAGPAGPPGP) are compositionally biased toward pro residues. Low complexity predominate over residues 842–872 (IGNVGAPGPKGPRGAAGPPGATGFPGAAGRV). Residue Lys851 is modified to 5-hydroxylysine. Residues Pro860 and Pro866 each carry the 4-hydroxyproline modification. The residue at position 874 (Pro874) is a 3-hydroxyproline. A 4-hydroxyproline mark is found at Pro875, Pro884, Pro887, Pro908, Pro917, Pro926, Pro935, Pro953, Pro962, Pro965, Pro971, Pro986, Pro992, Pro998, Pro1007, and Pro1013. The segment covering 901–910 (ETGPAGRPGE) has biased composition (low complexity). Low complexity predominate over residues 920 to 935 (AGEKGSPGADGPAGSP). The segment covering 985–995 (PPGPMGPPGLA) has biased composition (pro residues). Residues 997 to 1012 (PPGESGREGSPGAEGS) show a composition bias toward low complexity. Residue Lys1022 is modified to 5-hydroxylysine. A compositionally biased stretch (pro residues) spans 1031-1046 (AGPPGAPGAPGAPGPV). 4-hydroxyproline is present on residues Pro1034, Pro1037, and Pro1040. Residues 1067–1081 (IGPAGARGPAGPQGP) are compositionally biased toward low complexity. The short motif at 1082 to 1084 (RGD) is the Cell attachment site element. Residues 1082–1096 (RGDKGETGEQGDRGI) show a composition bias toward basic and acidic residues. Lys1085 bears the 5-hydroxylysine mark. Lys1097 is modified (5-hydroxylysine; alternate). Lys1097 carries an O-linked (Gal...) hydroxylysine; alternate glycan. Over residues 1102–1148 (FSGLQGPPGSPGSPGEQGPSGASGPAGPRGPPGSAGSPGKDGLNGLP) the composition is skewed to low complexity. Residues Pro1109, Pro1112, Pro1115, Pro1133, and Pro1148 each carry the 4-hydroxyproline modification. Pro1153 bears the 3-hydroxyproline mark. Pro1154 is subject to 4-hydroxyproline. Pro residues predominate over residues 1166–1181 (AGPPGPPGPPGPPGPP). 3-hydroxyproline is present on Pro1168. At Pro1169 the chain carries 4-hydroxyproline. Residue Pro1171 is modified to 3-hydroxyproline. At Pro1172 the chain carries 4-hydroxyproline. Pro1174 is modified (3-hydroxyproline). Residues Pro1175, Pro1178, and Pro1181 each carry the 4-hydroxyproline modification. A nonhelical region (C-terminal) region spans residues 1182–1207 (SGGYDFSFLPQPPQEKSQDGGRYYRA). Residue Lys1197 is modified to Allysine. Residues 1197-1210 (KSQDGGRYYRADDA) are compositionally biased toward basic and acidic residues. The propeptide at 1208–1453 (DDANVVRDRD…GLDIGPACFV (246 aa)) is C-terminal propeptide. The Fibrillar collagen NC1 domain maps to 1218–1453 (LEVDTTLKSL…GLDIGPACFV (236 aa)). 3 disulfide bridges follow: Cys1248–Cys1280, Cys1288–Cys1451, and Cys1359–Cys1404. Ca(2+)-binding residues include Asp1266, Asn1268, Gln1269, Cys1271, and Asp1274. N-linked (GlcNAc...) asparagine glycosylation is present at Asn1354.

Belongs to the fibrillar collagen family. As to quaternary structure, trimers of one alpha 2(I) and two alpha 1(I) chains. Interacts with MRC2. Interacts with TRAM2. Interacts with MFAP4 in a Ca (2+)-dependent manner. In terms of processing, contains mostly 4-hydroxyproline. Proline residues at the third position of the tripeptide repeating unit (G-X-Y) are hydroxylated in some or all of the chains. Post-translationally, contains 3-hydroxyproline at a few sites. This modification occurs on the first proline residue in the sequence motif Gly-Pro-Hyp, where Hyp is 4-hydroxyproline. Lysine residues at the third position of the tripeptide repeating unit (G-X-Y) are 5-hydroxylated in some or all of the chains. In terms of processing, O-glycosylated on hydroxylated lysine residues. The O-linked glycan consists of a Glc-Gal disaccharide. Forms the fibrils of tendon, ligaments and bones. In bones the fibrils are mineralized with calcium hydroxyapatite.

Its subcellular location is the secreted. It is found in the extracellular space. It localises to the extracellular matrix. Type I collagen is a member of group I collagen (fibrillar forming collagen). The polypeptide is Collagen alpha-1(I) chain (Mus musculus (Mouse)).